We begin with the raw amino-acid sequence, 912 residues long: WD repeat-containing protein 44 (912 aa).

Disordered stretches follow at residues 206–352 (DIIE…ELTD), 399–426 (SNDA…LKQK), and 460–481 (RDEV…GMPY). Positions 236–258 (NRPPQPINAPPPRPPPPARPAPP) are enriched in pro residues. A compositionally biased stretch (basic and acidic residues) spans 264 to 278 (GDTDFDRSSGFEYQK). Polar residues predominate over residues 288 to 311 (SPNTLTENMNRDSQPSLDLASATS). Positions 410–422 (KPQSHQSETDGGK) are enriched in basic and acidic residues. The span at 469–478 (DDPSSSDDEG) shows a compositional bias: acidic residues. A WD 1 repeat occupies 511 to 550 (EHVGAVWTMKFSHCGRLLASAGQDNVVRIWVLKNAFDYFN). The tract at residues 559-594 (EGRVSPSPSQESLNSSKSDTDGGVFSGTDDVDPDDK) is disordered. Residues 563–575 (SPSPSQESLNSSK) are compositionally biased toward low complexity. WD repeat units follow at residues 608–646 (GHTA…CLCC), 648–688 (QHID…VALW), 693–732 (GQTK…YHTQ), 743–782 (RVGR…LSMK), 787–826 (VNSS…SKFT), 841–880 (AHNA…ENIP), and 882–912 (GALK…KNIS). Positions 861–882 (AETSSEKQEGDQAEPVENIPSG) are disordered.

It is found in the cytoplasm. Its subcellular location is the cytosol. It localises to the perinuclear region. The protein localises to the endosome membrane. The protein resides in the golgi apparatus. It is found in the trans-Golgi network. Functionally, downstream effector for rab11. May be involved in vesicle recycling. May also be involved in the inhibition of the intracellular ciliogenesis pathway. This chain is WD repeat-containing protein 44 (wdr44), found in Xenopus laevis (African clawed frog).